A 304-amino-acid polypeptide reads, in one-letter code: Glutaminase (304 aa).

Substrate-binding residues include S63, N114, E158, N165, Y189, Y240, and V258.

This sequence belongs to the glutaminase family. In terms of assembly, homotetramer.

It catalyses the reaction L-glutamine + H2O = L-glutamate + NH4(+). The sequence is that of Glutaminase from Shewanella baltica (strain OS195).